The sequence spans 170 residues: Ribosome maturation factor RimM (170 aa).

Residues 98-170 form the PRC barrel domain; the sequence is PDEYYWVDLE…RIVVDWDPEF (73 aa).

The protein belongs to the RimM family. Binds ribosomal protein uS19.

The protein resides in the cytoplasm. Its function is as follows. An accessory protein needed during the final step in the assembly of 30S ribosomal subunit, possibly for assembly of the head region. Essential for efficient processing of 16S rRNA. May be needed both before and after RbfA during the maturation of 16S rRNA. It has affinity for free ribosomal 30S subunits but not for 70S ribosomes. The polypeptide is Ribosome maturation factor RimM (Xylella fastidiosa (strain 9a5c)).